The chain runs to 320 residues: PUP1 protein homolog (320 aa).

The next 2 helical transmembrane spans lie at 66–85 (MWGG…AYRY) and 100–119 (FVLG…RSMY). The tract at residues 205–320 (GGVFNGSPFM…QSGRYGGNRS (116 aa)) is disordered. Position 230 is a phosphoserine (Ser230). A compositionally biased stretch (polar residues) spans 253–266 (GDNSSSSSWENIRN). A compositionally biased stretch (basic and acidic residues) spans 267-284 (TSRDQSQESDASVDHESD).

Belongs to the PUP1 family.

It is found in the mitochondrion membrane. This is PUP1 protein homolog from Saccharomyces cerevisiae (strain ATCC 204508 / S288c) (Baker's yeast).